Here is a 142-residue protein sequence, read N- to C-terminus: HTH-type transcriptional regulator MntR (142 aa).

The 63-residue stretch at Met1 to Thr63 folds into the HTH dtxR-type domain. Mn(2+) contacts are provided by Asp8, Glu11, His77, Glu99, Glu102, and His103.

The protein belongs to the DtxR/MntR family. As to quaternary structure, homodimer.

Its subcellular location is the cytoplasm. DNA binding is strongly activated by Mn(2+). Central regulator of manganese homeostasis. The polypeptide is HTH-type transcriptional regulator MntR (Listeria monocytogenes serotype 4b (strain F2365)).